A 121-amino-acid chain; its full sequence is Prismalin-14 (121 aa).

Positions 1–16 (MRSLLVLLALAACASA) are cleaved as a signal peptide. At Gln-17 the chain carries Pyrrolidone carboxylic acid. 4 repeat units span residues 48 to 51 (PIYR), 52 to 55 (PIYR), 56 to 59 (PIYY), and 60 to 63 (PQII). Residues 48-63 (PIYRPIYRPIYYPQII) are 4 X 4 AA approximate tandem repeats of P-I-Y-R.

In terms of tissue distribution, expressed only at the mantle edge where it is found predominantly in the inner side of the outer mantle fold.

In terms of biological role, displays inhibitory activity against calcium carbonate precipitation, binds calcium and affects crystallization of calcium carbonate in vitro. May be involved in calcification of the prismatic layer of the shell. The chain is Prismalin-14 from Pinctada fucata (Akoya pearl oyster).